Here is a 258-residue protein sequence, read N- to C-terminus: 5'-nucleotidase SurE (258 aa).

A divalent metal cation-binding residues include Asp18, Asp19, Ser49, and Asn102.

Belongs to the SurE nucleotidase family. It depends on a divalent metal cation as a cofactor.

The protein localises to the cytoplasm. The enzyme catalyses a ribonucleoside 5'-phosphate + H2O = a ribonucleoside + phosphate. Its function is as follows. Nucleotidase that shows phosphatase activity on nucleoside 5'-monophosphates. This is 5'-nucleotidase SurE from Vibrio campbellii (strain ATCC BAA-1116).